The following is a 673-amino-acid chain: F420-dependent formate dehydrogenase subunit alpha (673 aa).

One can recognise a 4Fe-4S Mo/W bis-MGD-type domain in the interval 3–59 (FKIVNTICPYCGVGCGLGLVVKDGRVIGIHPNKRHPINEGKLCAKGNYCYQFIHSKD). Cys10, Cys13, Cys17, and Cys45 together coordinate [4Fe-4S] cluster. Residue Sec131 is a non-standard amino acid, selenocysteine.

It belongs to the prokaryotic molybdopterin-containing oxidoreductase family. Dimer of an alpha (FdhA) and a beta (FdhB) subunit. The cofactor is [4Fe-4S] cluster. Mo-bis(molybdopterin guanine dinucleotide) serves as cofactor. Requires Zn(2+) as cofactor.

It carries out the reaction oxidized coenzyme F420-(gamma-L-Glu)(n) + formate + 2 H(+) = reduced coenzyme F420-(gamma-L-Glu)(n) + CO2. Functionally, catalyzes the oxidation of formate to carbon dioxide, with coenzyme F420 as the electron acceptor. This is F420-dependent formate dehydrogenase subunit alpha (fdhA) from Methanocaldococcus jannaschii (strain ATCC 43067 / DSM 2661 / JAL-1 / JCM 10045 / NBRC 100440) (Methanococcus jannaschii).